A 132-amino-acid polypeptide reads, in one-letter code: MAVTHSVGDMLTKIRNASRVKHESVDLKMSKINRSILDILKEEGYIKNYNIFDKKGIPFIKAMLNYDGKRNPAINRIDAISTPGRKVYSSYKNMPRIKNGYGILIVSSSKGVITGKQAKDNKVGGELICSVW.

The protein belongs to the universal ribosomal protein uS8 family. As to quaternary structure, part of the 30S ribosomal subunit. Contacts proteins S5 and S12.

Its function is as follows. One of the primary rRNA binding proteins, it binds directly to 16S rRNA central domain where it helps coordinate assembly of the platform of the 30S subunit. The sequence is that of Small ribosomal subunit protein uS8 from Borrelia duttonii (strain Ly).